A 1043-amino-acid chain; its full sequence is Integrator complex subunit 3 (1043 aa).

Position 1 is an N-acetylmethionine (Met1). Residues Ser502, Ser537, and Ser995 each carry the phosphoserine modification. Positions 977-1043 are disordered; the sequence is YEDSSTKPPK…GSSAVGSDSD (67 aa). Acidic residues predominate over residues 1008–1022; the sequence is AEEESGSSSASEEED.

Belongs to the Integrator subunit 3 family. As to quaternary structure, component of the Integrator complex, composed of core subunits INTS1, INTS2, INTS3, INTS4, INTS5, INTS6, INTS7, INTS8, INTS9/RC74, INTS10, INTS11/CPSF3L, INTS12, INTS13, INTS14 and INTS15. The core complex associates with protein phosphatase 2A subunits PPP2CA and PPP2R1A, to form the Integrator-PP2A (INTAC) complex. Component of the SOSS complex, composed of SOSS-B (SOSS-B1/NABP2 or SOSS-B2/NABP1), SOSS-A/INTS3 and SOSS-C/INIP. SOSS complexes containing SOSS-B1/NABP2 are more abundant than complexes containing SOSS-B2/NABP1. Interacts with SOSS-B1/NABP2, SOSS-B2/NABP1 and SOSS-C/INIP; the interaction is direct. Interacts with NBN/NBS1.

The protein resides in the nucleus. It is found in the cytoplasm. Component of the integrator complex, a multiprotein complex that terminates RNA polymerase II (Pol II) transcription in the promoter-proximal region of genes. The integrator complex provides a quality checkpoint during transcription elongation by driving premature transcription termination of transcripts that are unfavorably configured for transcriptional elongation: the complex terminates transcription by (1) catalyzing dephosphorylation of the C-terminal domain (CTD) of Pol II subunit POLR2A/RPB1 and SUPT5H/SPT5, (2) degrading the exiting nascent RNA transcript via endonuclease activity and (3) promoting the release of Pol II from bound DNA. The integrator complex is also involved in terminating the synthesis of non-coding Pol II transcripts, such as enhancer RNAs (eRNAs), small nuclear RNAs (snRNAs), telomerase RNAs and long non-coding RNAs (lncRNAs). Within the integrator complex, INTS3 is involved in the post-termination step: INTS3 binds INTS7 in the open conformation of integrator complex and prevents the rebinding of Pol II to the integrator after termination cycle. Mediates recruitment of cytoplasmic dynein to the nuclear envelope, probably as component of the integrator complex. Its function is as follows. Component of the SOSS complex, a multiprotein complex that functions downstream of the MRN complex to promote DNA repair and G2/M checkpoint. The SOSS complex associates with single-stranded DNA at DNA lesions and influences diverse endpoints in the cellular DNA damage response including cell-cycle checkpoint activation, recombinational repair and maintenance of genomic stability. The SOSS complex is required for efficient homologous recombination-dependent repair of double-strand breaks (DSBs) and ATM-dependent signaling pathways. In the SOSS complex, it is required for the assembly of the complex and for stabilization of the complex at DNA damage sites. The protein is Integrator complex subunit 3 of Homo sapiens (Human).